We begin with the raw amino-acid sequence, 142 residues long: ATP synthase epsilon chain (142 aa).

This sequence belongs to the ATPase epsilon chain family. As to quaternary structure, F-type ATPases have 2 components, CF(1) - the catalytic core - and CF(0) - the membrane proton channel. CF(1) has five subunits: alpha(3), beta(3), gamma(1), delta(1), epsilon(1). CF(0) has three main subunits: a, b and c.

It is found in the cell inner membrane. Functionally, produces ATP from ADP in the presence of a proton gradient across the membrane. This chain is ATP synthase epsilon chain, found in Shewanella oneidensis (strain ATCC 700550 / JCM 31522 / CIP 106686 / LMG 19005 / NCIMB 14063 / MR-1).